A 651-amino-acid chain; its full sequence is MBT domain-containing protein 1 (651 aa).

A disordered region spans residues 21-55 (SFGMFDGYDSCSEDTSSSSSSDESEEEVAPLPSSL). Low complexity predominate over residues 29-41 (DSCSEDTSSSSSS). Residues 68-103 (PDGKSGMATCEMCGMVGVRDAFYSKTKRFCSVSCSR) form an FCS-type zinc finger. Residues Cys-77, Cys-80, Cys-97, and Cys-101 each contribute to the Zn(2+) site. MBT repeat units lie at residues 164-268 (FSWG…LVPP), 276-373 (TNWK…IGHR), 374-479 (FKRT…LTPP), and 487-583 (FKWF…LQPP). Disordered regions lie at residues 581–610 (QPPA…YKGH) and 629–651 (TFLQ…KQEP). The segment covering 586-596 (QSNKDSQSNIS) has biased composition (low complexity). The span at 597–610 (KQKKKSKSQPYKGH) shows a compositional bias: basic residues. The segment covering 632–643 (QGASDQESNGSG) has biased composition (polar residues).

In terms of assembly, monomer. Component of the NuA4 histone acetyltransferase complex.

The protein localises to the nucleus. The protein resides in the chromosome. Functionally, chromatin reader component of the NuA4 histone acetyltransferase complex, a multiprotein complex involved in transcriptional activation of select genes principally by acetylation of nucleosomal histones H4 and H2A. The NuA4 complex plays a direct role in repair of DNA double-strand breaks (DSBs) by promoting homologous recombination (HR). MBTD1 specifically recognizes and binds monomethylated and dimethylated 'Lys-20' on histone H4 (H4K20me1 and H4K20me2, respectively). In the NuA4 complex, MBTD1 promotes recruitment of the complex to H4K20me marks by competing with TP53BP1 for binding to H4K20me. Following recruitment to H4K20me at DNA breaks, the NuA4 complex catalyzes acetylation of 'Lys-15' on histone H2A (H2AK15), blocking the ubiquitination mark required for TP53BP1 localization at DNA breaks, thereby promoting homologous recombination (HR). This Xenopus tropicalis (Western clawed frog) protein is MBT domain-containing protein 1.